The following is a 206-amino-acid chain: Ion-translocating oxidoreductase complex subunit G (206 aa).

A helical membrane pass occupies residues 9 to 29; sequence GITLALFAAGSTGLTAAINQM. Thr174 bears the FMN phosphoryl threonine mark.

Belongs to the RnfG family. In terms of assembly, the complex is composed of six subunits: RsxA, RsxB, RsxC, RsxD, RsxE and RsxG. The cofactor is FMN.

The protein localises to the cell inner membrane. In terms of biological role, part of a membrane-bound complex that couples electron transfer with translocation of ions across the membrane. Required to maintain the reduced state of SoxR. Probably transfers electron from NAD(P)H to SoxR. The protein is Ion-translocating oxidoreductase complex subunit G of Escherichia coli (strain K12).